The chain runs to 273 residues: MDWLILIKAFLLGIVEGLTEFLPISSTGHLILAGDLLDFNDDKAQVFTVAIQLGAILSVCWEYRARLINVARGWGTRRANRFVLNLCVAFLPAAILGLLFIKTIKYYLFHPLPVAIALVTGGVLILWAERREHRIEVENVDDMNWKHALKIGCAQCLALIPGTSRSGATIIGGLLSGLSRKAAAEFSFFLAIPIMFAATFYDVYKHREFLHSDDLGMFVVGSIAAFISALIAIRGFIRYVSHHDFTLFAWYRIGFGLIVLLTAHFGLINWSAG.

7 helical membrane-spanning segments follow: residues L4–I24, K43–Y63, F82–K102, L108–A128, A183–V203, M217–I237, and I253–G273.

The protein belongs to the UppP family.

The protein localises to the cell inner membrane. It carries out the reaction di-trans,octa-cis-undecaprenyl diphosphate + H2O = di-trans,octa-cis-undecaprenyl phosphate + phosphate + H(+). Its function is as follows. Catalyzes the dephosphorylation of undecaprenyl diphosphate (UPP). Confers resistance to bacitracin. The protein is Undecaprenyl-diphosphatase of Nitrosomonas eutropha (strain DSM 101675 / C91 / Nm57).